A 103-amino-acid polypeptide reads, in one-letter code: MYAVIKTGGQQFKVKQGTILKIEKLEIEPGKKVTFKEVLIVSDGDDIQVGTPFVSKVTVEAKIISQGKGKKVHILKFRRRKHSMKQQGHRQLLTEIEIVKINA.

The protein belongs to the bacterial ribosomal protein bL21 family. Part of the 50S ribosomal subunit. Contacts protein L20.

Its function is as follows. This protein binds to 23S rRNA in the presence of protein L20. In Vesicomyosocius okutanii subsp. Calyptogena okutanii (strain HA), this protein is Large ribosomal subunit protein bL21.